Reading from the N-terminus, the 504-residue chain is Glutamate--tRNA ligase (504 aa).

The 'HIGH' region motif lies at 27–37 (PSPTGTPHVGL). The short motif at 271–275 (KLSKR) is the 'KMSKS' region element. Lysine 274 contributes to the ATP binding site.

The protein belongs to the class-I aminoacyl-tRNA synthetase family. Glutamate--tRNA ligase type 1 subfamily. In terms of assembly, monomer.

It localises to the cytoplasm. The catalysed reaction is tRNA(Glu) + L-glutamate + ATP = L-glutamyl-tRNA(Glu) + AMP + diphosphate. In terms of biological role, catalyzes the attachment of glutamate to tRNA(Glu) in a two-step reaction: glutamate is first activated by ATP to form Glu-AMP and then transferred to the acceptor end of tRNA(Glu). The chain is Glutamate--tRNA ligase from Arthrobacter sp. (strain FB24).